Consider the following 484-residue polypeptide: uncharacterized protein (484 aa).

A helical transmembrane segment spans residues 25–45 (PLSLFVVLAAVPLPIYFSGLL). Positions 384-419 (LSFEETKELWVRADLDGNGVFDYEELKKIWNMTMVN) constitute an EF-hand domain. Positions 397, 399, 401, and 408 each coordinate Ca(2+).

It localises to the membrane. This is an uncharacterized protein from Arabidopsis thaliana (Mouse-ear cress).